Consider the following 156-residue polypeptide: Hemerythrin-like protein (156 aa).

Residues His-54, His-84, Glu-88, His-109, His-113, His-142, and Asp-147 each coordinate Fe cation.

The protein belongs to the hemerythrin family.

Functionally, oxygen-binding protein. The oxygen-binding site contains two iron atoms. The chain is Hemerythrin-like protein from Nematostella vectensis (Starlet sea anemone).